The following is a 396-amino-acid chain: S100P-binding protein (396 aa).

The interval 145–249 (CDPVLDKDKI…RKNSGSHKSG (105 aa)) is disordered. Composition is skewed to basic and acidic residues over residues 148 to 161 (VLDK…KETE) and 168 to 185 (EQTR…RCTE). 2 stretches are compositionally biased toward polar residues: residues 202–215 (SSPS…TASD) and 227–246 (VFSQ…SGSH).

As to quaternary structure, interacts with S100P.

The protein localises to the nucleus. This is S100P-binding protein from Mus musculus (Mouse).